The primary structure comprises 79 residues: Cell division protein ZapB (79 aa).

The stretch at 3–79 forms a coiled coil; the sequence is LEVFEKLEAK…QALLGRMEEV (77 aa). Positions 36–45 are enriched in polar residues; the sequence is SLTQEVQSAQ. The tract at residues 36–63 is disordered; sequence SLTQEVQSAQHQREELERENNSLKEQQS. Over residues 46–57 the composition is skewed to basic and acidic residues; it reads HQREELERENNS.

The protein belongs to the ZapB family. As to quaternary structure, homodimer. The ends of the coiled-coil dimer bind to each other, forming polymers. Interacts with FtsZ.

The protein resides in the cytoplasm. In terms of biological role, non-essential, abundant cell division factor that is required for proper Z-ring formation. It is recruited early to the divisome by direct interaction with FtsZ, stimulating Z-ring assembly and thereby promoting cell division earlier in the cell cycle. Its recruitment to the Z-ring requires functional FtsA or ZipA. The protein is Cell division protein ZapB of Salmonella agona (strain SL483).